We begin with the raw amino-acid sequence, 66 residues long: UPF0337 protein M6_Spy1542 (66 aa).

Positions 1-10 are enriched in basic and acidic residues; the sequence is MSEEKLKAKV. The segment at 1 to 22 is disordered; sequence MSEEKLKAKVEQASGSLKEGAG.

This sequence belongs to the UPF0337 (CsbD) family.

The chain is UPF0337 protein M6_Spy1542 from Streptococcus pyogenes serotype M6 (strain ATCC BAA-946 / MGAS10394).